The chain runs to 318 residues: CMRF35-like molecule 8 (318 aa).

An N-terminal signal peptide occupies residues 1–27 (MTQLASAVWLPTLLLLLLLFWLPGCVP). In terms of domain architecture, Ig-like V-type spans 28–129 (LHGPSTMSGS…FDGSLGFDKY (102 aa)). Residues 28-185 (LHGPSTMSGS…HDYSQGLRLP (158 aa)) are Extracellular-facing. Residues C46 and C113 are joined by a disulfide bond. N93 carries an N-linked (GlcNAc...) asparagine glycan. A compositionally biased stretch (low complexity) spans 139-148 (SEDPVSSPGP). The interval 139–174 (SEDPVSSPGPTLETPVVSTSLPTKGPALGSNTEGHR) is disordered. Residues 186 to 206 (ALLSVLALLLFLLVGTSLLAW) form a helical membrane-spanning segment. Residues 207–318 (RMFQKRLVKA…PRKGLSDLYL (112 aa)) lie on the Cytoplasmic side of the membrane. The span at 284 to 296 (QDSHANGDSLHQP) shows a compositional bias: polar residues. The interval 284 to 318 (QDSHANGDSLHQPQDQKAEYSEIQKPRKGLSDLYL) is disordered. Basic and acidic residues predominate over residues 297-308 (QDQKAEYSEIQK). Y303 carries the post-translational modification Phosphotyrosine.

The protein belongs to the CD300 family. As to quaternary structure, upon tyrosine-phosphorylation, interacts with PTN6/SHP-1 and PTPN11/SHP-2 and INPP5D. Phosphorylated on tyrosine. Post-translationally, N-glycosylated. As to expression, present on the surface of the majority of myeloid cells and a subset of B-cells. Present on the surface of NK cells after IL-12 stimulation.

The protein localises to the cell membrane. Inhibitory receptor which may contribute to the down-regulation of cytolytic activity in natural killer (NK) cells, and to the down-regulation of mast cell degranulation. Negatively regulates the Toll-like receptor (TLR) signaling mediated by MYD88 but not TRIF through activation of PTPN6. The chain is CMRF35-like molecule 8 (Cd300a) from Mus musculus (Mouse).